We begin with the raw amino-acid sequence, 138 residues long: Basic phospholipase A2 homolog bothropstoxin-II (138 aa).

An N-terminal signal peptide occupies residues 1-16 (MRTLWIMAVLLVGVEG). Disulfide bonds link Cys-42-Cys-131, Cys-44-Cys-60, Cys-59-Cys-111, Cys-65-Cys-138, Cys-66-Cys-104, Cys-73-Cys-97, and Cys-91-Cys-102. An important for membrane-damaging activities in eukaryotes and bacteria; heparin-binding region spans residues 121–133 (KRYMAYPDVLCKK).

It belongs to the phospholipase A2 family. Group II subfamily. D49 sub-subfamily. As to quaternary structure, homodimer; non-covalently linked (probable alternative/compact dimer conformation). As to expression, expressed by the venom gland.

It is found in the secreted. Snake venom phospholipase A2 (PLA2) that shows low enzymatic activity even tough it conserves the catalytic residues. Shows a strong myotoxic activity and induces indirect hemolysis, anticoagulant properties, and cytotoxic activities. In vivo, it induces muscle necrosis, accompanied by polymorphonuclear cell infiltration, and edema in the mouse paw. It exerts its function even in the absence of extracellular calcium, indicating it is not a calcium-dependent enzyme. A model of myotoxic mechanism has been proposed: an apo Lys49-PLA2 is activated by the entrance of a hydrophobic molecule (e.g. fatty acid) at the hydrophobic channel of the protein leading to a reorientation of a monomer. This reorientation causes a transition between 'inactive' to 'active' states, causing alignment of C-terminal and membrane-docking sites (MDoS) side-by-side and putting the membrane-disruption sites (MDiS) in the same plane, exposed to solvent and in a symmetric position for both monomers. The MDoS region stabilizes the toxin on membrane by the interaction of charged residues with phospholipid head groups. Subsequently, the MDiS region destabilizes the membrane with penetration of hydrophobic residues. This insertion causes a disorganization of the membrane, allowing an uncontrolled influx of ions (i.e. calcium and sodium), and eventually triggering irreversible intracellular alterations and cell death. The sequence is that of Basic phospholipase A2 homolog bothropstoxin-II from Bothrops jararacussu (Jararacussu).